We begin with the raw amino-acid sequence, 307 residues long: Woronin sorting complex protein (307 aa).

A run of 3 helical transmembrane segments spans residues 106-125, 146-167, and 207-227; these read MATY…IWIL, NLIV…IAGA, and AWMP…NYIT. The segment covering 241-264 has biased composition (basic and acidic residues); that stretch reads GDGAHGDHRHDRERERDRERERHS. The interval 241–307 is disordered; that stretch reads GDGAHGDHRH…YPSLGQNPRY (67 aa). A compositionally biased stretch (low complexity) spans 266 to 278; it reads PPHGHGPSHGGRP.

It belongs to the peroxisomal membrane protein PXMP2/4 family. In terms of assembly, self-assembles into detergent-resistant oligomers and forms a complex with hex-1 assemblies.

The protein resides in the peroxisome membrane. It is found in the cell septum. Woronin sorting complex protein involved in both Woronin bodies (WB) formation and inherence. Localizes to large peroxisome membranes where it self-assembles into detergent-resistant oligomers that envelop hex-1 assemblies, producing asymmetrical nascent WBs. These structures are then delivered to the cell cortex, which permits partitioning of the nascent WB and WB inheritance. The chain is Woronin sorting complex protein from Neurospora crassa (strain ATCC 24698 / 74-OR23-1A / CBS 708.71 / DSM 1257 / FGSC 987).